A 547-amino-acid chain; its full sequence is 2-succinyl-5-enolpyruvyl-6-hydroxy-3-cyclohexene-1-carboxylate synthase (547 aa).

It belongs to the TPP enzyme family. MenD subfamily. As to quaternary structure, homodimer. The cofactor is Mg(2+). Mn(2+) serves as cofactor. It depends on thiamine diphosphate as a cofactor.

It catalyses the reaction isochorismate + 2-oxoglutarate + H(+) = 5-enolpyruvoyl-6-hydroxy-2-succinyl-cyclohex-3-ene-1-carboxylate + CO2. It functions in the pathway quinol/quinone metabolism; 1,4-dihydroxy-2-naphthoate biosynthesis; 1,4-dihydroxy-2-naphthoate from chorismate: step 2/7. Its pathway is quinol/quinone metabolism; menaquinone biosynthesis. In terms of biological role, catalyzes the thiamine diphosphate-dependent decarboxylation of 2-oxoglutarate and the subsequent addition of the resulting succinic semialdehyde-thiamine pyrophosphate anion to isochorismate to yield 2-succinyl-5-enolpyruvyl-6-hydroxy-3-cyclohexene-1-carboxylate (SEPHCHC). The sequence is that of 2-succinyl-5-enolpyruvyl-6-hydroxy-3-cyclohexene-1-carboxylate synthase from Mycobacterium sp. (strain JLS).